A 201-amino-acid polypeptide reads, in one-letter code: Glycerol-3-phosphate acyltransferase (201 aa).

A run of 5 helical transmembrane segments spans residues 5–25 (LLGALLVAAGYLAGSIPFGVV), 55–75 (KMGVLVLVLDAAKAIVPILVA), 87–107 (FWVTAVAVAAFVGHLFPVWLG), 118–138 (LGIFAVLAPWAALAGLVGYAV), and 164–184 (TYGPRHPVSWAGLAIALLIFV).

The protein belongs to the PlsY family. Probably interacts with PlsX.

The protein localises to the cell inner membrane. It catalyses the reaction an acyl phosphate + sn-glycerol 3-phosphate = a 1-acyl-sn-glycero-3-phosphate + phosphate. It functions in the pathway lipid metabolism; phospholipid metabolism. Its function is as follows. Catalyzes the transfer of an acyl group from acyl-phosphate (acyl-PO(4)) to glycerol-3-phosphate (G3P) to form lysophosphatidic acid (LPA). This enzyme utilizes acyl-phosphate as fatty acyl donor, but not acyl-CoA or acyl-ACP. This is Glycerol-3-phosphate acyltransferase from Anaeromyxobacter dehalogenans (strain 2CP-1 / ATCC BAA-258).